The following is a 323-amino-acid chain: tRNA U34 carboxymethyltransferase (323 aa).

Carboxy-S-adenosyl-L-methionine contacts are provided by residues Lys91, Trp105, Lys110, Gly130, Asp152 to Ser154, Ile181 to Glu182, Met196, Tyr200, and Arg315.

Belongs to the class I-like SAM-binding methyltransferase superfamily. CmoB family. As to quaternary structure, homotetramer.

The catalysed reaction is carboxy-S-adenosyl-L-methionine + 5-hydroxyuridine(34) in tRNA = 5-carboxymethoxyuridine(34) in tRNA + S-adenosyl-L-homocysteine + H(+). Catalyzes carboxymethyl transfer from carboxy-S-adenosyl-L-methionine (Cx-SAM) to 5-hydroxyuridine (ho5U) to form 5-carboxymethoxyuridine (cmo5U) at position 34 in tRNAs. The polypeptide is tRNA U34 carboxymethyltransferase (Vibrio vulnificus (strain CMCP6)).